The primary structure comprises 113 residues: Large ribosomal subunit protein uL22 (113 aa).

The protein belongs to the universal ribosomal protein uL22 family. In terms of assembly, part of the 50S ribosomal subunit.

Functionally, this protein binds specifically to 23S rRNA; its binding is stimulated by other ribosomal proteins, e.g. L4, L17, and L20. It is important during the early stages of 50S assembly. It makes multiple contacts with different domains of the 23S rRNA in the assembled 50S subunit and ribosome. In terms of biological role, the globular domain of the protein is located near the polypeptide exit tunnel on the outside of the subunit, while an extended beta-hairpin is found that lines the wall of the exit tunnel in the center of the 70S ribosome. The polypeptide is Large ribosomal subunit protein uL22 (Herpetosiphon aurantiacus (strain ATCC 23779 / DSM 785 / 114-95)).